The sequence spans 164 residues: 16S rRNA aminocarboxypropyltransferase (164 aa).

Residues Thr18, Ile66, Leu87, and Ser106 each contribute to the S-adenosyl-L-methionine site.

This sequence belongs to the TDD superfamily. TSR3 family.

The protein resides in the cytoplasm. It catalyses the reaction an N(1)-methylpseudouridine in rRNA + S-adenosyl-L-methionine = N(1)-methyl-N(3)-[(3S)-3-amino-3-carboxypropyl]pseudouridine in rRNA + S-methyl-5'-thioadenosine + H(+). Functionally, aminocarboxypropyltransferase that catalyzes the aminocarboxypropyl transfer on pseudouridine corresponding to position 914 in M.jannaschii 16S rRNA. It constitutes the last step in biosynthesis of the hypermodified N1-methyl-N3-(3-amino-3-carboxypropyl) pseudouridine (m1acp3-Psi). In Thermoplasma volcanium (strain ATCC 51530 / DSM 4299 / JCM 9571 / NBRC 15438 / GSS1), this protein is 16S rRNA aminocarboxypropyltransferase.